The chain runs to 1015 residues: MKLLKPTWVNHNGKPIFSVDIHPDGTKFATGGQGQDSGKVVIWNMSPVLQEDDEKDENIPKMLCQMDNHLACVNCVRWSNSGMYLASGGDDKLIMVWKRATYIGPSTVFGSSGKLANVEQWRCVSILRSHSGDVMDVAWSPHDAWLASCSVDNTVVIWNAVKFPEILATLRGHSGLVKGLTWDPVGKYIASQADDRSLKVWRTLDWQLETSITKPFDECGGTTHVLRLSWSPDGHYLVSAHAMNNSGPTAQIIEREGWKTNMDFVGHRKAVTVVKFNPKIFKKKQKNGSSTKPSCPYCCCAVGSKDRSLSVWLTCLKRPLVVIHELFDKSIMDISWTLNGLGILVCSMDGSVAFLDFSQDELGDPLSEEEKSRIHQSTYGKSLAIMTEAQLSTAVIENPEMLKYQRRQQQQQLDQKNATTRETSSASSVTGVVNGESLEDIRKNLLKKQVETRTADGRRRITPLCIAQLDTGDFSTAFFNSIPLSSSLAGTMLSSPSGQQLLPLDSSTPSFGASKPCTEPVAATSARPTGESVSKDSMNATSTPAASSPSVLTTPSKIEPMKAFDSRFTERSKATPGAPSLTSVIPTAVERLKEQNLVKELRSRELESSSDSDEKVHLAKPSSLSKRKLELEVETVEKKKKGRPRKDSRLLPMSLSVQSPAALSTEKEAMCLSAPALALKLPIPGPQRAFTLQVSSDPSMYIEVENEVTTVGGIRLSRLKCNREGKEWETVLSSRVLTAAGSCDVVCVACEKRMLSVFSTCGRRLLPPILLPSPISTLHCTGPYVMALTAAATLSVWDVHRQVVVVKEESLHSILSGSDMTVSQILLTQHGIPVMNLSDGKAYCFNPSLSTWNLVSDKQDSLAQCADFRNSLPSQDAMLCSGPLAIIQGRTSNSGRQAARLFSVPHVVQQETTLAYLENQVAAALTLQSSHEYRHWLLLYARYLVNEGFEYRLREICKDLLGPVHCSTGSQWESTVVGLRKRELLKELLPVIGQNLRFQRLFTECQEQLDILRDK.

WD repeat units follow at residues 11–53 (HNGK…QEDD) and 68–107 (NHLACVNCVRWSNSGMYLASGGDDKLIMVWKRATYIGPST). Ser-111 bears the Phosphoserine mark. 5 WD repeats span residues 129–168 (SHSGDVMDVAWSPHDAWLASCSVDNTVVIWNAVKFPEILA), 172–211 (GHSGLVKGLTWDPVGKYIASQADDRSLKVWRTLDWQLETS), 220–263 (GGTT…TNMD), 266–322 (GHRK…PLVV), and 326–367 (LFDK…DPLS). The interval 408–431 (QQQQQLDQKNATTRETSSASSVTG) is disordered. The span at 413 to 431 (LDQKNATTRETSSASSVTG) shows a compositional bias: polar residues. Residues 421–479 (RETSSASSVTGVVNGESLEDIRKNLLKKQVETRTADGRRRITPLCIAQLDTGDFSTAFF) are interaction with ASF1A. The interval 421-727 (RETSSASSVT…RLKCNREGKE (307 aa)) is interaction with CCNA1. Positions 439 to 475 (EDIRKNLLKKQVETRTADGRRRITPLCIAQLDTGDFS) are required for repression of histone gene transcription. 2 stretches are compositionally biased toward low complexity: residues 494-507 (SSPSGQQLLPLDSS) and 540-556 (ATSTPAASSPSVLTTPS). The disordered stretch occupies residues 494–558 (SSPSGQQLLP…PSVLTTPSKI (65 aa)). Ser-548 bears the Phosphoserine mark. Thr-554 is modified (phosphothreonine). At Ser-556 the chain carries Phosphoserine. Thr-575 bears the Phosphothreonine mark. A phosphoserine mark is found at Ser-583, Ser-608, Ser-609, Ser-610, Ser-612, Ser-659, and Ser-673. Interaction with PAX3 regions lie at residues 593–737 (KEQN…SRVL) and 738–826 (TAAG…SQIL). The tract at residues 594–824 (EQNLVKELRS…LSGSDMTVSQ (231 aa)) is interaction with histone H2B. Basic and acidic residues predominate over residues 603–617 (SRELESSSDSDEKVH). The disordered stretch occupies residues 603-623 (SRELESSSDSDEKVHLAKPSS). The interval 736-1015 (VLTAAGSCDV…QEQLDILRDK (280 aa)) is interaction with histone H4.

This sequence belongs to the WD repeat HIR1 family. In terms of assembly, interacts with CCNA1, HIRIP3 and NFU1/HIRIP5. Part of a complex which includes ASF1A, CABIN1, histone H3.3, histone H4 and UBN1. Interacts with histone H2B, histone H3-3B, PAX3 and PAX7. In terms of processing, sumoylated. Post-translationally, phosphorylated by CDK2/CCNA1 and CDK2/CCNE1 on Thr-554 in vitro. Also phosphorylated on Thr-554 in vivo. As to expression, expressed in cerebrum, cerebellum, heart, kidney, liver, lung and spleen.

It localises to the nucleus. It is found in the PML body. Functionally, required for the periodic repression of histone gene transcription during the cell cycle. Cooperates with ASF1A to promote replication-independent chromatin assembly. Required for the formation of senescence-associated heterochromatin foci (SAHF) and efficient senescence-associated cell cycle exit. The protein is Protein HIRA (Hira) of Mus musculus (Mouse).